The primary structure comprises 210 residues: Probable molybdenum cofactor guanylyltransferase (210 aa).

GTP contacts are provided by residues 18-20 (LAG), Lys-31, Asn-59, Asp-86, and Asp-111. Residue Asp-111 coordinates Mg(2+).

The protein belongs to the MobA family. Mg(2+) is required as a cofactor.

It is found in the cytoplasm. The catalysed reaction is Mo-molybdopterin + GTP + H(+) = Mo-molybdopterin guanine dinucleotide + diphosphate. In terms of biological role, transfers a GMP moiety from GTP to Mo-molybdopterin (Mo-MPT) cofactor (Moco or molybdenum cofactor) to form Mo-molybdopterin guanine dinucleotide (Mo-MGD) cofactor. In Haloferax mediterranei (strain ATCC 33500 / DSM 1411 / JCM 8866 / NBRC 14739 / NCIMB 2177 / R-4) (Halobacterium mediterranei), this protein is Probable molybdenum cofactor guanylyltransferase (nasC).